The following is a 465-amino-acid chain: MKLSLAAALLGALAVSAQTSTECNPLKQKCPADPALAGSADFGLTSESPRFHATGGTPTYGNDGASLTIGKRFDAPKLTSDFYIMFGYVEWEIKAAPGKGIVSSAVLLSDCLDEIDWEFLGGDPNQVQSNFFGKGDTTTYDRVKFHPAPNNNQEFHKYAVDWTADKTTFYIDGQNVRELTPDAAKGQYPQTPMRVLAGSWAGGDPSNNQGTIEWAGGETDFSKVPFTMFVKSIKVTDYSTGKEYVYKDMTGKWESIQAVDGQVNKSGKPGSGPKVESSTLPSSPSTSAHVPVHTVPGGGIGNPQAPNTGSSPSNTLTNGPSSTMTSLVGLPSSWIVTETGTGGVVTPTSAAESTSHHSDYTSRSSRSVSSSVSASSGNGGHGMTTSTGSGSAPTGTGSLPGSGSGSAPGYPVPTGTNGGGSNNPTDGGASPTSPAMQAPGSTGAIHSVSNALLLSFCAIAAWALV.

Residues Met-1–Thr-21 form the signal peptide. The GH16 domain maps to Glu-22 to Lys-223. An intrachain disulfide couples Cys-23 to Cys-30. Glu-114 serves as the catalytic Nucleophile. Glu-118 acts as the Proton donor in catalysis. Glu-118, Trp-200, and Thr-211 together coordinate chitin. Disordered stretches follow at residues Gly-261 to Thr-325 and Thr-339 to Thr-442. An N-linked (GlcNAc...) asparagine glycan is attached at Asn-264. A compositionally biased stretch (low complexity) spans Ser-277–Ser-287. Residues Gln-304 to Thr-325 are compositionally biased toward polar residues. 3 stretches are compositionally biased toward low complexity: residues Thr-339–Thr-348, Thr-361–Ser-376, and Met-383–Gly-397. The GPI-anchor amidated serine moiety is linked to residue Ser-441. The propeptide at Thr-442–Val-465 is removed in mature form.

The protein belongs to the glycosyl hydrolase 16 family. CRH1 subfamily. In terms of processing, the GPI-anchor is attached to the protein in the endoplasmic reticulum and serves to target the protein to the cell surface. There, the glucosamine-inositol phospholipid moiety is cleaved off and the GPI-modified mannoprotein is covalently attached via its lipidless GPI glycan remnant to the 1,6-beta-glucan of the outer cell wall layer.

Its subcellular location is the secreted. It localises to the cell wall. The protein resides in the membrane. It carries out the reaction Random endo-hydrolysis of N-acetyl-beta-D-glucosaminide (1-&gt;4)-beta-linkages in chitin and chitodextrins.. Its function is as follows. Dual chitinase/transglycosylase that plays a role in cell wall architecture. Chitinase and transglycosylase activities are coupled. Required for the polysaccharide cross-linking at the septa and the cell wall. More specifically, transfers chitin to 1,6-beta-glucan in the cell wall. In Arthroderma benhamiae (strain ATCC MYA-4681 / CBS 112371) (Trichophyton mentagrophytes), this protein is Crh-like protein ARB_05253.